We begin with the raw amino-acid sequence, 656 residues long: Chromosomal replication initiator protein DnaA (656 aa).

The tract at residues 1–100 is domain I, interacts with DnaA modulators; that stretch reads MADVPADLAA…TAGEPAGPAP (100 aa). Residues 91–313 form a disordered region; sequence TAGEPAGPAP…PAPATGPGEP (223 aa). Positions 97–109 are enriched in pro residues; that stretch reads GPAPQAPQSPPSR. Positions 101 to 315 are domain II; the sequence is QAPQSPPSRP…PATGPGEPTA (215 aa). 2 stretches are compositionally biased toward basic and acidic residues: residues 126 to 144 and 231 to 273; these read GREE…RNRA and QRGD…RDLP. The span at 291-313 shows a compositional bias: low complexity; that stretch reads GPATGAPGPLAAQPAPATGPGEP. The segment at 316–532 is domain III, AAA+ region; the sequence is RLNPKYLFDT…GALIRVTAFA (217 aa). Positions 360, 362, 363, and 364 each coordinate ATP. The domain IV, binds dsDNA stretch occupies residues 533-656; sequence SLNRQPVDLG…TELTNRIKNG (124 aa).

Belongs to the DnaA family. As to quaternary structure, oligomerizes as a right-handed, spiral filament on DNA at oriC.

The protein localises to the cytoplasm. Plays an essential role in the initiation and regulation of chromosomal replication. ATP-DnaA binds to the origin of replication (oriC) to initiate formation of the DNA replication initiation complex once per cell cycle. Binds the DnaA box (a 9 base pair repeat at the origin) and separates the double-stranded (ds)DNA. Forms a right-handed helical filament on oriC DNA; dsDNA binds to the exterior of the filament while single-stranded (ss)DNA is stabiized in the filament's interior. The ATP-DnaA-oriC complex binds and stabilizes one strand of the AT-rich DNA unwinding element (DUE), permitting loading of DNA polymerase. After initiation quickly degrades to an ADP-DnaA complex that is not apt for DNA replication. Binds acidic phospholipids. This is Chromosomal replication initiator protein DnaA from Streptomyces coelicolor (strain ATCC BAA-471 / A3(2) / M145).